Here is a 196-residue protein sequence, read N- to C-terminus: Crossover junction endodeoxyribonuclease RuvC (196 aa).

Active-site residues include Asp23, Glu83, and His156. The Mg(2+) site is built by Asp23, Glu83, and His156.

It belongs to the RuvC family. Homodimer which binds Holliday junction (HJ) DNA. The HJ becomes 2-fold symmetrical on binding to RuvC with unstacked arms; it has a different conformation from HJ DNA in complex with RuvA. In the full resolvosome a probable DNA-RuvA(4)-RuvB(12)-RuvC(2) complex forms which resolves the HJ. Mg(2+) serves as cofactor.

The protein localises to the cytoplasm. The catalysed reaction is Endonucleolytic cleavage at a junction such as a reciprocal single-stranded crossover between two homologous DNA duplexes (Holliday junction).. In terms of biological role, the RuvA-RuvB-RuvC complex processes Holliday junction (HJ) DNA during genetic recombination and DNA repair. Endonuclease that resolves HJ intermediates. Cleaves cruciform DNA by making single-stranded nicks across the HJ at symmetrical positions within the homologous arms, yielding a 5'-phosphate and a 3'-hydroxyl group; requires a central core of homology in the junction. The consensus cleavage sequence is 5'-(A/T)TT(C/G)-3'. Cleavage occurs on the 3'-side of the TT dinucleotide at the point of strand exchange. HJ branch migration catalyzed by RuvA-RuvB allows RuvC to scan DNA until it finds its consensus sequence, where it cleaves and resolves the cruciform DNA. This is Crossover junction endodeoxyribonuclease RuvC from Treponema pallidum (strain Nichols).